The chain runs to 181 residues: Acireductone dioxygenase (181 aa).

Residues His-97, His-99, Glu-103, and His-141 each coordinate Fe(2+). 4 residues coordinate Ni(2+): His-97, His-99, Glu-103, and His-141.

This sequence belongs to the acireductone dioxygenase (ARD) family. Monomer. The cofactor is Fe(2+). Ni(2+) is required as a cofactor.

It carries out the reaction 1,2-dihydroxy-5-(methylsulfanyl)pent-1-en-3-one + O2 = 3-(methylsulfanyl)propanoate + CO + formate + 2 H(+). It catalyses the reaction 1,2-dihydroxy-5-(methylsulfanyl)pent-1-en-3-one + O2 = 4-methylsulfanyl-2-oxobutanoate + formate + 2 H(+). It participates in amino-acid biosynthesis; L-methionine biosynthesis via salvage pathway; L-methionine from S-methyl-5-thio-alpha-D-ribose 1-phosphate: step 5/6. In terms of biological role, catalyzes 2 different reactions between oxygen and the acireductone 1,2-dihydroxy-3-keto-5-methylthiopentene (DHK-MTPene) depending upon the metal bound in the active site. Fe-containing acireductone dioxygenase (Fe-ARD) produces formate and 2-keto-4-methylthiobutyrate (KMTB), the alpha-ketoacid precursor of methionine in the methionine recycle pathway. Ni-containing acireductone dioxygenase (Ni-ARD) produces methylthiopropionate, carbon monoxide and formate, and does not lie on the methionine recycle pathway. The polypeptide is Acireductone dioxygenase (Pseudomonas syringae pv. tomato (strain ATCC BAA-871 / DC3000)).